We begin with the raw amino-acid sequence, 178 residues long: Signaling threshold-regulating transmembrane adapter 1 (178 aa).

At 1 to 23 (MSRENNCTTADLAWGIPSITQAW) the chain is on the extracellular side. The N-linked (GlcNAc...) asparagine glycan is linked to N6. Residues 24-44 (GLWALFGVVTMLLLISLAALL) form a helical; Signal-anchor for type III membrane protein membrane-spanning segment. The Cytoplasmic segment spans residues 45-178 (SQWTRGRRRT…AYANSQPAPS (134 aa)). Phosphoserine occurs at positions 62 and 65. Y72 carries the post-translational modification Phosphotyrosine. Positions 72–75 (YGNL) are interaction with GRB2. Residues 81-102 (GRLSEESRSEEQDPSSGGLARG) are disordered. Residues S84, S87, and S89 each carry the phosphoserine modification. Y109 bears the Phosphotyrosine mark. T126 is subject to Phosphothreonine. Residues 128–133 (IKYCEV) form an interaction with PTPN11 region. A phosphotyrosine mark is found at Y130 and Y151. Residues 151 to 154 (YASV) are interaction with CSK. S164 carries the post-translational modification Phosphoserine. Y170 carries the phosphotyrosine modification. Residues 170 to 173 (YANS) are interaction with GRB2.

As to quaternary structure, homodimer; disulfide-linked. When phosphorylated, interacts with PTPN11/SHP2, GRB2 and CSK. Post-translationally, phosphorylated on tyrosines upon TCR activation; which promotes recruitment of PTPN11, GRB2 and CSK. Lymph node, spleen and thymus.

It localises to the cell membrane. In terms of biological role, negatively regulates T-cell antigen receptor (TCR)-mediated signaling. Involved in positive selection of T-cells. The polypeptide is Signaling threshold-regulating transmembrane adapter 1 (Sit1) (Rattus norvegicus (Rat)).